Here is a 179-residue protein sequence, read N- to C-terminus: CASP-like protein 1F1 (179 aa).

The Cytoplasmic portion of the chain corresponds to 1–16; sequence MENVEDKYNSPLKSQK. A helical membrane pass occupies residues 17–37; sequence LFIGAQICLRIVTIGATLAAT. Topologically, residues 38-65 are extracellular; that stretch reads WIMVTDKQSITFGDFVMVAKYNYSSAFK. The N-linked (GlcNAc...) asparagine glycan is linked to asparagine 59. Residues 66–86 traverse the membrane as a helical segment; that stretch reads FFVLANVIACACSVVSLLFLC. Over 87 to 105 the chain is Cytoplasmic; that stretch reads ALGRYSSNPGHVFLLFLHD. Residues 106-126 form a helical membrane-spanning segment; the sequence is LLMMSLVLAGCSAATAIGFLG. At 127 to 150 the chain is on the extracellular side; sequence KYGNTKSGWMPICDQFGQFCNRGT. The chain crosses the membrane as a helical span at residues 151–171; it reads ISMMLSYLSMVCLLILTVTSA. At 172-179 the chain is on the cytoplasmic side; that stretch reads NKSRQIHV.

The protein belongs to the Casparian strip membrane proteins (CASP) family. Homodimer and heterodimers.

The protein localises to the cell membrane. This Ricinus communis (Castor bean) protein is CASP-like protein 1F1.